Here is a 442-residue protein sequence, read N- to C-terminus: MSEMTPREIVHELDAHIIGQQKAKRSVAVALRNRWRRMQLDADFRQEVTPKNILMIGPTGVGKTEIARRLAKLANAPFIKVEATKFTEVGYVGKEVEQIIRDLTDIAIKLTREQQMGKCRQRAEEHAEERILDALLPKPKNDWESTETDSSSNTRQVFRKKLREGQLDDKEIDIDVAQPQIGVEIMSPPGMEEMTNQLQSLFKNMGQAPAKRRKMKIKEAFKLLIEEEAAKLVNQEDLKEQAIEMVEQHGIVFLDEIDKICKRGETSGPDVSREGVQRDLLPLVEGCTVTTKHGMVKTDHILFIASGAFQMSKPSDLIPELQGRLPIRVELDALSADDFKRILTEPHASLTEQYIALMNTEGVKVEFSESGIDSIAKAAWQVNERTENIGARRLHTVMEKLMEDISYEASEKSGSAFVIDADYVSAHLDNLVQDEDLSRFIL.

ATP contacts are provided by residues I18 and 60-65 (GVGKTE). Positions 136–157 (LPKPKNDWESTETDSSSNTRQV) are disordered. 3 residues coordinate ATP: D255, E320, and R392.

The protein belongs to the ClpX chaperone family. HslU subfamily. As to quaternary structure, a double ring-shaped homohexamer of HslV is capped on each side by a ring-shaped HslU homohexamer. The assembly of the HslU/HslV complex is dependent on binding of ATP.

It is found in the cytoplasm. Functionally, ATPase subunit of a proteasome-like degradation complex; this subunit has chaperone activity. The binding of ATP and its subsequent hydrolysis by HslU are essential for unfolding of protein substrates subsequently hydrolyzed by HslV. HslU recognizes the N-terminal part of its protein substrates and unfolds these before they are guided to HslV for hydrolysis. The polypeptide is ATP-dependent protease ATPase subunit HslU (Shewanella baltica (strain OS185)).